Consider the following 359-residue polypeptide: MSTENTLSVADLARENIRNLVPYQSARRLGGNGDVWLNANEFPTAVEFQLTQQTLNRYPECQPKAVIENYAQYAGVKPEQVLVSRGADEGIELVIRAFCEPGKDAILYCPPTYGMYSVSAETIGVERRTVPALENWQLDLQGISDNLDGTKVAFVCSPNNPTGQLINPQDLRTLLELTRGKAIVVADEAYIEFCPQATLTGWLVEYPHLVILRTLSKAFALAGLRCGFTLANEEVINLLLKVIAPYPLSTPVADIAAQALSPQGINAMRDRVAQTVQERQYLVNALQQTACVEHVFDSETNYILARFTASSSVFKSLWDQGIILRDQNKQPSLSGCLRITVGTRQENQRVIDALRAEPV.

Residue Lys-217 is modified to N6-(pyridoxal phosphate)lysine.

This sequence belongs to the class-II pyridoxal-phosphate-dependent aminotransferase family. Histidinol-phosphate aminotransferase subfamily. In terms of assembly, homodimer. It depends on pyridoxal 5'-phosphate as a cofactor.

The enzyme catalyses L-histidinol phosphate + 2-oxoglutarate = 3-(imidazol-4-yl)-2-oxopropyl phosphate + L-glutamate. It participates in amino-acid biosynthesis; L-histidine biosynthesis; L-histidine from 5-phospho-alpha-D-ribose 1-diphosphate: step 7/9. The protein is Histidinol-phosphate aminotransferase of Salmonella paratyphi A (strain ATCC 9150 / SARB42).